The following is a 126-amino-acid chain: Fluoride-specific ion channel FluC (126 aa).

The next 4 helical transmembrane spans lie at 4 to 24 (FAIL…RYLV), 38 to 58 (YGTL…IAAF), 71 to 91 (IIGL…MDNV), and 104 to 124 (LNVV…FQLL). The Na(+) site is built by Gly78 and Thr81.

Belongs to the fluoride channel Fluc/FEX (TC 1.A.43) family.

It is found in the cell inner membrane. It catalyses the reaction fluoride(in) = fluoride(out). With respect to regulation, na(+) is not transported, but it plays an essential structural role and its presence is essential for fluoride channel function. Functionally, fluoride-specific ion channel. Important for reducing fluoride concentration in the cell, thus reducing its toxicity. The chain is Fluoride-specific ion channel FluC from Vibrio vulnificus (strain CMCP6).